Here is a 156-residue protein sequence, read N- to C-terminus: ATP synthase subunit b (156 aa).

Residues 7 to 27 (IFFQMLVFFVLGWFTMKFVWP) traverse the membrane as a helical segment.

This sequence belongs to the ATPase B chain family. In terms of assembly, F-type ATPases have 2 components, F(1) - the catalytic core - and F(0) - the membrane proton channel. F(1) has five subunits: alpha(3), beta(3), gamma(1), delta(1), epsilon(1). F(0) has three main subunits: a(1), b(2) and c(10-14). The alpha and beta chains form an alternating ring which encloses part of the gamma chain. F(1) is attached to F(0) by a central stalk formed by the gamma and epsilon chains, while a peripheral stalk is formed by the delta and b chains.

The protein localises to the cell inner membrane. Its function is as follows. F(1)F(0) ATP synthase produces ATP from ADP in the presence of a proton or sodium gradient. F-type ATPases consist of two structural domains, F(1) containing the extramembraneous catalytic core and F(0) containing the membrane proton channel, linked together by a central stalk and a peripheral stalk. During catalysis, ATP synthesis in the catalytic domain of F(1) is coupled via a rotary mechanism of the central stalk subunits to proton translocation. In terms of biological role, component of the F(0) channel, it forms part of the peripheral stalk, linking F(1) to F(0). This is ATP synthase subunit b from Bordetella pertussis (strain Tohama I / ATCC BAA-589 / NCTC 13251).